Reading from the N-terminus, the 220-residue chain is Ribosome maturation factor RimP (220 aa).

Positions 1–15 (MSQRGRATRPTGPTG) are enriched in low complexity. Disordered stretches follow at residues 1–35 (MSQR…GGDL) and 184–220 (PGRV…GEER). Over residues 198–220 (DGADGADEAGDFDDDDDVEGEER) the composition is skewed to acidic residues.

Belongs to the RimP family.

Its subcellular location is the cytoplasm. Its function is as follows. Required for maturation of 30S ribosomal subunits. The sequence is that of Ribosome maturation factor RimP from Salinispora tropica (strain ATCC BAA-916 / DSM 44818 / JCM 13857 / NBRC 105044 / CNB-440).